A 475-amino-acid polypeptide reads, in one-letter code: MISLLTYTLKNLPNTSKWALRFCMRPLSSSSQLQAAAASQTKSKKTLAKPNIRNIVVVDGVRTPFLLSGTSYKDLMPHDLARAALSGLLHRTSVPKDVVDYIIFGTVIQEVKTSNVAREAALGAGFSDKTPAHTVTMACISSNQAMTTAVGLIASGQCDVVVAGGVELMSDIPIRHSRKMRKMMLDLNKAKTLAQRLSIISKFRLNFLSPELPAVSEFSTSETMGHSADRLAAAFAISREEQDEYALRSHSLAKKAQDEGLLSDVVPFKVPGRDTVTQDNGIRPSSLDQMAKLKPAFIKPYGTVTAANSSFLTDGASAVLIMAEEKALAMGYKPKAYLRDFMYVSQDPKDQLLLGPTYATPKVLEKAGLTMNDIDVFEFHEAFSGQILANLKAMDSDWFAQNYMGRKAKVGLPPLEKFNNWGGSLSLGHPFGATGCRLVMAAANRLRKEGGQYGLVAACAAGGQGHAMIVEAYPK.

The transit peptide at 1-34 (MISLLTYTLKNLPNTSKWALRFCMRPLSSSSQLQ) directs the protein to the mitochondrion. N6-acetyllysine; alternate is present on Lys-73. Residue Lys-73 is modified to N6-succinyllysine; alternate. The Acyl-thioester intermediate role is filled by Cys-139. An intramembrane segment occupies 174 to 221 (IRHSRKMRKMMLDLNKAKTLAQRLSIISKFRLNFLSPELPAVSEFSTS). Position 189 is an N6-acetyllysine; alternate (Lys-189). Lys-189 carries the N6-succinyllysine; alternate modification. N6-succinyllysine is present on residues Lys-191 and Lys-292. N6-acetyllysine; alternate is present on Lys-294. Residue Lys-294 is modified to N6-succinyllysine; alternate. An N6-acetyllysine modification is found at Lys-299. Lys-333 is modified (N6-acetyllysine; alternate). Lys-333 is subject to N6-succinyllysine; alternate. An N6-acetyllysine mark is found at Lys-349 and Lys-362. Residue Cys-459 is the Proton donor/acceptor of the active site.

It belongs to the thiolase-like superfamily. Thiolase family. As to quaternary structure, heterotetramer of 2 alpha/HADHA and 2 beta/HADHB subunits; forms the mitochondrial trifunctional enzyme. Also purified as higher order heterooligomers including a 4 alpha/HADHA and 4 beta/HADHB heterooligomer which physiological significance remains unclear. The mitochondrial trifunctional enzyme interacts with MTLN. Interacts with RSAD2/viperin.

The protein resides in the mitochondrion. The protein localises to the mitochondrion inner membrane. It is found in the mitochondrion outer membrane. Its subcellular location is the endoplasmic reticulum. It carries out the reaction an acyl-CoA + acetyl-CoA = a 3-oxoacyl-CoA + CoA. It catalyses the reaction butanoyl-CoA + acetyl-CoA = 3-oxohexanoyl-CoA + CoA. The catalysed reaction is hexanoyl-CoA + acetyl-CoA = 3-oxooctanoyl-CoA + CoA. The enzyme catalyses octanoyl-CoA + acetyl-CoA = 3-oxodecanoyl-CoA + CoA. It carries out the reaction decanoyl-CoA + acetyl-CoA = 3-oxododecanoyl-CoA + CoA. It catalyses the reaction dodecanoyl-CoA + acetyl-CoA = 3-oxotetradecanoyl-CoA + CoA. The catalysed reaction is tetradecanoyl-CoA + acetyl-CoA = 3-oxohexadecanoyl-CoA + CoA. Its pathway is lipid metabolism; fatty acid beta-oxidation. Functionally, mitochondrial trifunctional enzyme catalyzes the last three of the four reactions of the mitochondrial beta-oxidation pathway. The mitochondrial beta-oxidation pathway is the major energy-producing process in tissues and is performed through four consecutive reactions breaking down fatty acids into acetyl-CoA. Among the enzymes involved in this pathway, the trifunctional enzyme exhibits specificity for long-chain fatty acids. Mitochondrial trifunctional enzyme is a heterotetrameric complex composed of two proteins, the trifunctional enzyme subunit alpha/HADHA carries the 2,3-enoyl-CoA hydratase and the 3-hydroxyacyl-CoA dehydrogenase activities, while the trifunctional enzyme subunit beta/HADHB described here bears the 3-ketoacyl-CoA thiolase activity. This Bos taurus (Bovine) protein is Trifunctional enzyme subunit beta, mitochondrial (HADHB).